The chain runs to 340 residues: GTPase Obg (340 aa).

The Obg domain maps to 1–159; that stretch reads MGFIDEVKLC…KHVLLKLKVL (159 aa). One can recognise an OBG-type G domain in the interval 160–329; that stretch reads SDVGIIGMPN…LSEKLKKSNS (170 aa). Residues 166-173, 191-195, 212-215, 279-282, and 310-312 each bind GTP; these read GMPNAGKS, FTTVR, DIPG, NKCD, and NGD. Mg(2+)-binding residues include Ser-173 and Thr-193.

The protein belongs to the TRAFAC class OBG-HflX-like GTPase superfamily. OBG GTPase family. Monomer. Mg(2+) is required as a cofactor.

It localises to the cytoplasm. An essential GTPase which binds GTP, GDP and possibly (p)ppGpp with moderate affinity, with high nucleotide exchange rates and a fairly low GTP hydrolysis rate. Plays a role in control of the cell cycle, stress response, ribosome biogenesis and in those bacteria that undergo differentiation, in morphogenesis control. The sequence is that of GTPase Obg from Wolbachia pipientis wMel.